The sequence spans 143 residues: Small ribosomal subunit protein uS12 (143 aa).

Proline 62 carries the hydroxyproline modification.

It belongs to the universal ribosomal protein uS12 family. In terms of assembly, component of the 40S small ribosomal subunit.

The protein resides in the cytoplasm. Its subcellular location is the cytosol. The protein localises to the rough endoplasmic reticulum. The polypeptide is Small ribosomal subunit protein uS12 (rps-23) (Caenorhabditis elegans).